A 132-amino-acid chain; its full sequence is Rubredoxin-1 (132 aa).

In terms of domain architecture, Rubredoxin-like spans 1–53 (MSRYQCPDCQYIYDENKGEPHEGFHPNTSWNDIPKDWACPDCAVRDKVDFIFL). Residues Cys6, Cys9, Cys39, and Cys42 each contribute to the Fe cation site. The tract at residues 108–132 (TEVLDQASTPQVVRKSSTRKKMRNK) is disordered. Residues 113–122 (QASTPQVVRK) show a composition bias toward polar residues. Residues 123–132 (SSTRKKMRNK) are compositionally biased toward basic residues.

Belongs to the rubredoxin family. The cofactor is Fe(3+).

Its subcellular location is the cytoplasm. The protein operates within hydrocarbon metabolism; alkane degradation. In terms of biological role, not known. Probably involved in an electron transport pathway, but not required for the hydrocarbon hydroxylating system. Seems to be non-functional. The chain is Rubredoxin-1 (alkF) from Ectopseudomonas oleovorans (Pseudomonas oleovorans).